Consider the following 159-residue polypeptide: Small ribosomal subunit protein uS13 (159 aa).

A disordered region spans residues 136 to 159; it reads QRTRSTGRSGATVGVTRKKTQAKK. Low complexity predominate over residues 138-149; sequence TRSTGRSGATVG.

It belongs to the universal ribosomal protein uS13 family. In terms of assembly, part of the 30S ribosomal subunit. Forms a loose heterodimer with protein S19. Forms two bridges to the 50S subunit in the 70S ribosome.

Functionally, located at the top of the head of the 30S subunit, it contacts several helices of the 16S rRNA. In the 70S ribosome it contacts the 23S rRNA (bridge B1a) and protein L5 of the 50S subunit (bridge B1b), connecting the 2 subunits; these bridges are implicated in subunit movement. The polypeptide is Small ribosomal subunit protein uS13 (Methanothrix thermoacetophila (strain DSM 6194 / JCM 14653 / NBRC 101360 / PT) (Methanosaeta thermophila)).